We begin with the raw amino-acid sequence, 282 residues long: Homeobox protein pv.1 (282 aa).

2 stretches are compositionally biased toward basic and acidic residues: residues 17 to 26 and 44 to 59; these read EEAADGKDSM and YAKE…DVQE. Residues 17–128 are disordered; the sequence is EEAADGKDSM…HRGESPKSDL (112 aa). Composition is skewed to polar residues over residues 86–96 and 103–114; these read WGSSDDFSSVG and EGSPSPMRNSQE. Residues 116–128 show a composition bias toward basic and acidic residues; it reads ETDHRGESPKSDL. The homeobox DNA-binding region spans 129-188; the sequence is QRHLRTAFTPQQISKLEQAFNKQRYLGASERKKLATSLRLSEIQVKTWFQNRRMKLKRQI.

Expressed in the ventral marginal zone of blastulae. At early gastrulation, expression begins to spread to the animal pole (ectoderm), and at stage 11.5 is expressed in a gradient across the animal cap, with levels highest in the ventral region. At the end of gastrulation, predominantly localized to the ventral and lateral regions of the closing slit blastopore. Also expressed at a low level in ventral endoderm.

Its subcellular location is the nucleus. In terms of biological role, transcriptional repressor. Acts in a ventral signaling pathway downstream of bmp4, which suppresses dorsal mesoderm formation and leads to both ventral mesoderm and ventral ectoderm formation. Acts in the ectoderm to simultaneously specify epidermal lineages and restrict neuralization. Represses transcription of dorsal-specific genes. Binds to DNA, with preference for the target sequences 5'-TAATGC-3' and 5'-TAATTG-3'. Acts in a pathway downstream of bmp4 and fgf to negatively regulate erythroid specification. The polypeptide is Homeobox protein pv.1 (Xenopus laevis (African clawed frog)).